An 874-amino-acid polypeptide reads, in one-letter code: Alanine--tRNA ligase (874 aa).

Zn(2+) contacts are provided by His-559, His-563, Cys-661, and His-665.

The protein belongs to the class-II aminoacyl-tRNA synthetase family. It depends on Zn(2+) as a cofactor.

It is found in the cytoplasm. The catalysed reaction is tRNA(Ala) + L-alanine + ATP = L-alanyl-tRNA(Ala) + AMP + diphosphate. Functionally, catalyzes the attachment of alanine to tRNA(Ala) in a two-step reaction: alanine is first activated by ATP to form Ala-AMP and then transferred to the acceptor end of tRNA(Ala). Also edits incorrectly charged Ser-tRNA(Ala) and Gly-tRNA(Ala) via its editing domain. The sequence is that of Alanine--tRNA ligase from Microcystis aeruginosa (strain NIES-843 / IAM M-2473).